Here is a 191-residue protein sequence, read N- to C-terminus: Fe/S biogenesis protein NfuA (191 aa).

[4Fe-4S] cluster-binding residues include C149 and C152.

This sequence belongs to the NfuA family. In terms of assembly, homodimer. It depends on [4Fe-4S] cluster as a cofactor.

Its function is as follows. Involved in iron-sulfur cluster biogenesis. Binds a 4Fe-4S cluster, can transfer this cluster to apoproteins, and thereby intervenes in the maturation of Fe/S proteins. Could also act as a scaffold/chaperone for damaged Fe/S proteins. The chain is Fe/S biogenesis protein NfuA from Erwinia tasmaniensis (strain DSM 17950 / CFBP 7177 / CIP 109463 / NCPPB 4357 / Et1/99).